A 167-amino-acid chain; its full sequence is 6,7-dimethyl-8-ribityllumazine synthase (167 aa).

5-amino-6-(D-ribitylamino)uracil is bound by residues phenylalanine 23, 57-59 (TYE), and 81-83 (AVI). A (2S)-2-hydroxy-3-oxobutyl phosphate-binding site is contributed by 86–87 (GT). Histidine 89 functions as the Proton donor in the catalytic mechanism. A 5-amino-6-(D-ribitylamino)uracil-binding site is contributed by phenylalanine 119. A (2S)-2-hydroxy-3-oxobutyl phosphate-binding site is contributed by arginine 133.

This sequence belongs to the DMRL synthase family.

The catalysed reaction is (2S)-2-hydroxy-3-oxobutyl phosphate + 5-amino-6-(D-ribitylamino)uracil = 6,7-dimethyl-8-(1-D-ribityl)lumazine + phosphate + 2 H2O + H(+). Its pathway is cofactor biosynthesis; riboflavin biosynthesis; riboflavin from 2-hydroxy-3-oxobutyl phosphate and 5-amino-6-(D-ribitylamino)uracil: step 1/2. Catalyzes the formation of 6,7-dimethyl-8-ribityllumazine by condensation of 5-amino-6-(D-ribitylamino)uracil with 3,4-dihydroxy-2-butanone 4-phosphate. This is the penultimate step in the biosynthesis of riboflavin. The polypeptide is 6,7-dimethyl-8-ribityllumazine synthase (Myxococcus xanthus (strain DK1622)).